The following is a 450-amino-acid chain: uncharacterized protein (450 aa).

One can recognise a TRAM domain in the interval 1 to 58 (MAKGEIVTVKIEEMDFKGYGVGYCEGKPLKVRGGILGQRVAVRVKKGKKGRAEGEIVE). Residues cysteine 71, cysteine 77, cysteine 80, and cysteine 159 each coordinate [4Fe-4S] cluster. Residues glutamine 285, tyrosine 314, glutamate 335, and aspartate 380 each contribute to the S-adenosyl-L-methionine site. Cysteine 407 (nucleophile) is an active-site residue.

The protein belongs to the class I-like SAM-binding methyltransferase superfamily. RNA M5U methyltransferase family.

This is an uncharacterized protein from Caldanaerobacter subterraneus subsp. tengcongensis (strain DSM 15242 / JCM 11007 / NBRC 100824 / MB4) (Thermoanaerobacter tengcongensis).